The primary structure comprises 483 residues: Betaine aldehyde dehydrogenase (483 aa).

K(+) is bound by residues Ile-27 and Asp-93. Residue 149 to 151 (GAW) coordinates NAD(+). The active-site Charge relay system is the Lys-161. 175–178 (KPSE) provides a ligand contact to NAD(+). Residue Val-179 coordinates K(+). Position 228–231 (228–231 (SVPT)) interacts with NAD(+). Val-243 serves as a coordination point for K(+). Glu-249 (proton acceptor) is an active-site residue. NAD(+) is bound by residues Gly-251, Cys-283, and Glu-380. Cys-283 acts as the Nucleophile in catalysis. The residue at position 283 (Cys-283) is a Cysteine sulfenic acid (-SOH). K(+) contacts are provided by Lys-450 and Gly-453. The Charge relay system role is filled by Glu-457.

This sequence belongs to the aldehyde dehydrogenase family. Dimer of dimers. K(+) serves as cofactor.

The enzyme catalyses betaine aldehyde + NAD(+) + H2O = glycine betaine + NADH + 2 H(+). The protein operates within amine and polyamine biosynthesis; betaine biosynthesis via choline pathway; betaine from betaine aldehyde: step 1/1. Involved in the biosynthesis of the osmoprotectant glycine betaine. Catalyzes the irreversible oxidation of betaine aldehyde to the corresponding acid. The sequence is that of Betaine aldehyde dehydrogenase from Cereibacter sphaeroides (strain KD131 / KCTC 12085) (Rhodobacter sphaeroides).